The following is a 117-amino-acid chain: MNVAETYEPTPIIFTDNAAAKVKSLIEDEGNDELSLRVFVTGGGCSGFQYGFSFDEAVNEDDTIVEKDGVRLVVDSLSYQYLVGAEVDFREGLEGAQFVIKNPNASTTCGCGSSFSI.

Positions 45, 109, and 111 each coordinate iron-sulfur cluster.

The protein belongs to the HesB/IscA family. Homodimer. The cofactor is iron-sulfur cluster.

Functionally, required for insertion of 4Fe-4S clusters for at least IspG. This chain is Iron-sulfur cluster insertion protein ErpA, found in Hahella chejuensis (strain KCTC 2396).